A 490-amino-acid chain; its full sequence is Betaine aldehyde dehydrogenase (490 aa).

Thr26, Ile27, and Asp93 together coordinate K(+). Residue Gly150–Trp152 participates in NAD(+) binding. The active-site Charge relay system is Lys162. Residue Lys176 to Glu179 coordinates NAD(+). A K(+)-binding site is contributed by Val180. Gly230–Ser233 lines the NAD(+) pocket. Residue Leu246 participates in K(+) binding. Glu252 (proton acceptor) is an active-site residue. NAD(+)-binding residues include Gly254, Cys286, and Glu387. Cys286 (nucleophile) is an active-site residue. A Cysteine sulfenic acid (-SOH) modification is found at Cys286. K(+) contacts are provided by Lys457 and Gly460. Glu464 acts as the Charge relay system in catalysis.

This sequence belongs to the aldehyde dehydrogenase family. Dimer of dimers. K(+) serves as cofactor.

It carries out the reaction betaine aldehyde + NAD(+) + H2O = glycine betaine + NADH + 2 H(+). It participates in amine and polyamine biosynthesis; betaine biosynthesis via choline pathway; betaine from betaine aldehyde: step 1/1. Functionally, involved in the biosynthesis of the osmoprotectant glycine betaine. Catalyzes the irreversible oxidation of betaine aldehyde to the corresponding acid. The chain is Betaine aldehyde dehydrogenase from Escherichia coli O7:K1 (strain IAI39 / ExPEC).